Reading from the N-terminus, the 501-residue chain is Myrosinase MA1 (501 aa).

Intrachain disulfides connect C6-C438, C14-C434, and C206-C214. An N-linked (GlcNAc...) asparagine glycan is attached at N21. Residue Q39 participates in substrate binding. Position 56 (H56) interacts with Zn(2+). N-linked (GlcNAc...) asparagine glycosylation is present at N60. Residue D70 coordinates Zn(2+). N90 is a glycosylation site (N-linked (GlcNAc...) asparagine). H141 and N186 together coordinate substrate. Q187 contributes to the L-ascorbate binding site. Residues N218 and N244 are each glycosylated (N-linked (GlcNAc...) asparagine). L-ascorbate is bound at residue R259. N-linked (GlcNAc...) asparagine glycans are attached at residues N265 and N292. Substrate is bound at residue Y330. 3 N-linked (GlcNAc...) asparagine glycosylation sites follow: N343, N346, and N361. The active-site Nucleophile is E409. Residues W457 and 464–465 contribute to the substrate site; that span reads EF. An N-linked (GlcNAc...) asparagine glycan is attached at N482.

This sequence belongs to the glycosyl hydrolase 1 family. As to quaternary structure, homodimer. In vacuoles called myrosin grains of a certain class of cells, myrosin cells, distributed in the cotyledons and the axis of the embryo as well as in different organs of the growing plant.

The protein resides in the vacuole. It catalyses the reaction a thioglucoside + H2O = a sugar + a thiol.. Its function is as follows. Degradation of glucosinolates (glucose residue linked by a thioglucoside bound to an amino acid derivative) to glucose, sulfate and any of the products: thiocyanates, isothiocyanates, nitriles, epithionitriles or oxazolidine-2-thiones. The chain is Myrosinase MA1 from Sinapis alba (White mustard).